The sequence spans 338 residues: Tryptophan--tRNA ligase (338 aa).

ATP is bound by residues 11 to 13 (QPS) and 19 to 20 (GN). Positions 12 to 20 (PSGELSIGN) match the 'HIGH' region motif. Asp135 contacts L-tryptophan. Residues 147–149 (GSD), Val189, and 198–202 (KMSKS) each bind ATP. The short motif at 198–202 (KMSKS) is the 'KMSKS' region element.

The protein belongs to the class-I aminoacyl-tRNA synthetase family. In terms of assembly, homodimer.

It localises to the cytoplasm. The catalysed reaction is tRNA(Trp) + L-tryptophan + ATP = L-tryptophyl-tRNA(Trp) + AMP + diphosphate + H(+). Functionally, catalyzes the attachment of tryptophan to tRNA(Trp). The chain is Tryptophan--tRNA ligase from Aliivibrio fischeri (strain ATCC 700601 / ES114) (Vibrio fischeri).